The sequence spans 147 residues: Large ribosomal subunit protein uL13 (147 aa).

This sequence belongs to the universal ribosomal protein uL13 family. Part of the 50S ribosomal subunit.

Functionally, this protein is one of the early assembly proteins of the 50S ribosomal subunit, although it is not seen to bind rRNA by itself. It is important during the early stages of 50S assembly. The chain is Large ribosomal subunit protein uL13 from Nocardia farcinica (strain IFM 10152).